Consider the following 91-residue polypeptide: Alpha-latrotoxin associated low molecular weight protein SGV150-311 (91 aa).

Residues 1–18 form the signal peptide; that stretch reads MNVLHFLILLMSVVSVFC.

The protein belongs to the arthropod CHH/MIH/GIH/VIH hormone family. As to expression, expressed by the venom gland.

It is found in the secreted. In terms of biological role, may increase the toxicity of alpha-latrotoxin and/or other venom components. Is non-toxic to mice and to the cockroach Periplaneta americana. The polypeptide is Alpha-latrotoxin associated low molecular weight protein SGV150-311 (Steatoda grossa (False black widow)).